Consider the following 257-residue polypeptide: Small ribosomal subunit protein uS2 (257 aa).

Belongs to the universal ribosomal protein uS2 family.

This chain is Small ribosomal subunit protein uS2, found in Bartonella henselae (strain ATCC 49882 / DSM 28221 / CCUG 30454 / Houston 1) (Rochalimaea henselae).